The chain runs to 335 residues: Galactosylgalactosylxylosylprotein 3-beta-glucuronosyltransferase 3 (335 aa).

Residues 1 to 7 (MKLKLKN) lie on the Cytoplasmic side of the membrane. Residues 8–28 (VFLAYFLVSIAGLLYALVQLG) traverse the membrane as a helical; Signal-anchor for type II membrane protein segment. Over 29-335 (QPCDCLPPLR…GQGSDPAIEV (307 aa)) the chain is Lumenal. Asp196 contributes to the Mn(2+) binding site. Catalysis depends on Glu281, which acts as the Proton acceptor. N-linked (GlcNAc...) asparagine glycosylation occurs at Asn300. Residues 312–322 (EKPKMKQEEQL) show a composition bias toward basic and acidic residues. The interval 312 to 335 (EKPKMKQEEQLQRQGQGSDPAIEV) is disordered.

This sequence belongs to the glycosyltransferase 43 family. In terms of assembly, homodimer; disulfide-linked. Interacts with PXYLP1; the interaction increases the 2-phosphoxylose phosphatase activity of PXYLP1 during completion of linkage region formation in a B3GAT3-mediated manner. It depends on Mn(2+) as a cofactor. In terms of processing, N-glycosylated. Liver, brain and heart. Moderate expression seen in lung, skeletal muscle, kidney and testis.

It is found in the golgi apparatus membrane. Its subcellular location is the golgi apparatus. The protein localises to the cis-Golgi network. The enzyme catalyses 3-O-(beta-D-galactosyl-(1-&gt;3)-beta-D-galactosyl-(1-&gt;4)-beta-D-xylosyl)-L-seryl-[protein] + UDP-alpha-D-glucuronate = 3-O-(beta-D-GlcA-(1-&gt;3)-beta-D-Gal-(1-&gt;3)-beta-D-Gal-(1-&gt;4)-beta-D-Xyl)-L-seryl-[protein] + UDP + H(+). It participates in protein modification; protein glycosylation. Functionally, glycosaminoglycans biosynthesis. Involved in forming the linkage tetrasaccharide present in heparan sulfate and chondroitin sulfate. Transfers a glucuronic acid moiety from the uridine diphosphate-glucuronic acid (UDP-GlcUA) to the common linkage region trisaccharide Gal-beta-1,3-Gal-beta-1,4-Xyl covalently bound to a Ser residue at the glycosaminylglycan attachment site of proteoglycans. Can also play a role in the biosynthesis of l2/HNK-1 carbohydrate epitope on glycoproteins. Highest activity seen with Gal-beta-1,3-Gal-beta-O-R (where R=naphthalenemethanol or benzyl alcohol). Stimulates 2-phosphoxylose phosphatase activity of PXYLP1 in presence of uridine diphosphate-glucuronic acid (UDP-GlcUA) during completion of linkage region formation. The chain is Galactosylgalactosylxylosylprotein 3-beta-glucuronosyltransferase 3 (B3GAT3) from Cricetulus griseus (Chinese hamster).